The primary structure comprises 327 residues: Ferrochelatase 2 (327 aa).

His201 and Glu282 together coordinate Fe cation.

This sequence belongs to the ferrochelatase family.

The protein resides in the cytoplasm. It catalyses the reaction heme b + 2 H(+) = protoporphyrin IX + Fe(2+). The protein operates within porphyrin-containing compound metabolism; protoheme biosynthesis; protoheme from protoporphyrin-IX: step 1/1. Functionally, catalyzes the ferrous insertion into protoporphyrin IX. The chain is Ferrochelatase 2 from Shewanella oneidensis (strain ATCC 700550 / JCM 31522 / CIP 106686 / LMG 19005 / NCIMB 14063 / MR-1).